We begin with the raw amino-acid sequence, 271 residues long: Plasmanylethanolamine desaturase 1 (271 aa).

Residues 1–25 (MAGAEDAPGRQPELDEDETAEGRRW) are disordered. 3 helical membrane-spanning segments follow: residues 48-68 (WCSVILCFSLIAHNLVHLLLL), 75-95 (PLVILGVVAGALVADFLSGLV), and 166-186 (LYPWECFVFCLTIFGTFTNQI). The short motif at 187-191 (HKWSH) is the Histidine box-1 element. Positions 214-218 (HHRIH) match the Histidine box-2 motif.

It belongs to the fatty acid desaturase CarF family.

It is found in the endoplasmic reticulum membrane. It carries out the reaction a 1-(1,2-saturated alkyl)-2-acyl-sn-glycero-3-phosphoethanolamine + 2 Fe(II)-[cytochrome b5] + O2 + 2 H(+) = a 1-O-(1Z-alkenyl)-2-acyl-sn-glycero-3-phosphoethanolamine + 2 Fe(III)-[cytochrome b5] + 2 H2O. The catalysed reaction is a 1-O-hexadecyl-2-acyl-sn-glycero-3-phosphoethanolamine + 2 Fe(II)-[cytochrome b5] + O2 + 2 H(+) = a 1-O-(1Z-hexadecenyl)-2-acyl-sn-glycero-3-phosphoethanolamine + 2 Fe(III)-[cytochrome b5] + 2 H2O. It catalyses the reaction a 1-O-octadecyl-2-acyl-sn-glycero-3-phosphoethanolamine + 2 Fe(II)-[cytochrome b5] + O2 + 2 H(+) = a 1-O-(1Z-octadecenyl)-2-acyl-sn-glycero-3-phosphoethanolamine + 2 Fe(III)-[cytochrome b5] + 2 H2O. The enzyme catalyses a 1-O-(9Z-octadecenyl)-2-acyl-sn-glycero-3-phosphoethanolamine + 2 Fe(II)-[cytochrome b5] + O2 + 2 H(+) = a 1-O-(1Z,9Z-octadecadienyl)-2-acyl-sn-glycero-3-phosphoethanolamine + 2 Fe(III)-[cytochrome b5] + 2 H2O. It functions in the pathway lipid metabolism; fatty acid metabolism. Plasmanylethanolamine desaturase involved in plasmalogen biogenesis in the endoplasmic reticulum membrane. Plasmalogens are glycerophospholipids with a hydrocarbon chain linked by a vinyl ether bond at the glycerol sn-1 position, and are involved in antioxidative and signaling mechanisms. The chain is Plasmanylethanolamine desaturase 1 from Mus musculus (Mouse).